Reading from the N-terminus, the 443-residue chain is Eukaryotic translation initiation factor 3 subunit E (443 aa).

A PCI domain is found at 249–417 (LDLFFNAGFI…GTVVMNHPPS (169 aa)).

The protein belongs to the eIF-3 subunit E family. Component of the eukaryotic translation initiation factor 3 (eIF-3) complex.

The protein resides in the cytoplasm. Its function is as follows. Component of the eukaryotic translation initiation factor 3 (eIF-3) complex, which is involved in protein synthesis of a specialized repertoire of mRNAs and, together with other initiation factors, stimulates binding of mRNA and methionyl-tRNAi to the 40S ribosome. The eIF-3 complex specifically targets and initiates translation of a subset of mRNAs involved in cell proliferation. This is Eukaryotic translation initiation factor 3 subunit E (int-6) from Neurospora crassa (strain ATCC 24698 / 74-OR23-1A / CBS 708.71 / DSM 1257 / FGSC 987).